The sequence spans 351 residues: MAKRRLNKRQQWRIEKIQKERTVRAARKEKAVEEQAAAGELGPEQNGLVIAHYGQQLDIEALEGPESGQVFRCFVRANIDSLVTGDRVVWRPGKSKTGVIVARCERENLLQRPDNFGALKPVAANIDHIILVIAPEPEPHDNLIDRYLVASESSDIPAVILLNKTDLINDDNRDQIEALLARYQALGYEVARTSAAETAGTPAPEVEALVRNQTSVFVGQSGVGKSSIIQTLLPDELLRVGAVSESTGKGVHTTTTAKLFHLPGGGDLIDSPGIREFGLWHMTPQEVEYGFREIRPLIGLCKFRNCRHMGDPGCALDAAAEAGDISPERLKSFHRILQDMTDQQARGLKLT.

Residues 107-277 (ENLLQRPDNF…LIDSPGIREF (171 aa)) form the CP-type G domain. Residues 163 to 166 (NKTD) and 219 to 227 (GQSGVGKSS) contribute to the GTP site. Zn(2+) contacts are provided by Cys-301, Cys-306, His-308, and Cys-314.

Belongs to the TRAFAC class YlqF/YawG GTPase family. RsgA subfamily. Monomer. Associates with 30S ribosomal subunit, binds 16S rRNA. Requires Zn(2+) as cofactor.

The protein resides in the cytoplasm. Functionally, one of several proteins that assist in the late maturation steps of the functional core of the 30S ribosomal subunit. Helps release RbfA from mature subunits. May play a role in the assembly of ribosomal proteins into the subunit. Circularly permuted GTPase that catalyzes slow GTP hydrolysis, GTPase activity is stimulated by the 30S ribosomal subunit. This is Small ribosomal subunit biogenesis GTPase RsgA from Marinobacter nauticus (strain ATCC 700491 / DSM 11845 / VT8) (Marinobacter aquaeolei).